The chain runs to 57 residues: Large ribosomal subunit protein bL33 (57 aa).

It belongs to the bacterial ribosomal protein bL33 family.

This is Large ribosomal subunit protein bL33 from Shewanella pealeana (strain ATCC 700345 / ANG-SQ1).